A 324-amino-acid chain; its full sequence is Chlorophyllase-1 (324 aa).

Residues 136 to 140 (GHSRG) carry the GXSXG motif. The active-site Nucleophile is the serine 138. Active-site charge relay system residues include aspartate 168 and histidine 243.

The protein belongs to the AB hydrolase superfamily. Lipase family. In terms of tissue distribution, expressed in seedlings, leaves, flowers and siliques, but not in roots.

It localises to the cytoplasm. It is found in the cytosol. It carries out the reaction a chlorophyll + H2O = a chlorophyllide + phytol + H(+). It catalyses the reaction chlorophyll a + H2O = phytol + chlorophyllide a + H(+). The protein operates within porphyrin-containing compound metabolism; chlorophyll degradation. Catalyzes the hydrolysis of ester bond in chlorophyll to yield chlorophyllide and phytol. Shows a preferential activity toward chlorophyll a. Does not seem to be required for chlorophyll degradation during senescence. May modulate the balance between different plant defense pathways. The protein is Chlorophyllase-1 of Arabidopsis thaliana (Mouse-ear cress).